The chain runs to 186 residues: MDLSSLRPAKGAVKARKRVGRGPGSGNGTTAGKGNKGQQSRSGYQRPVIEGGQMPIYRRLPKFGFTPPNQKAVACVNVAQIQMWIEKGLVGEEISVLDLKHLCNASNQEYFKVLGNGELTSTVTITAHFFSKSAEEKIAKAGGKIVKAYRTLEEAAKVNGLPFEEALLTPKAKVVKVKKEKKSVKS.

The disordered stretch occupies residues 1–48; that stretch reads MDLSSLRPAKGAVKARKRVGRGPGSGNGTTAGKGNKGQQSRSGYQRPV. Positions 21 to 35 are enriched in gly residues; sequence RGPGSGNGTTAGKGN.

It belongs to the universal ribosomal protein uL15 family. In terms of assembly, part of the 50S ribosomal subunit.

Binds to the 23S rRNA. The chain is Large ribosomal subunit protein uL15 from Chlorobaculum tepidum (strain ATCC 49652 / DSM 12025 / NBRC 103806 / TLS) (Chlorobium tepidum).